Consider the following 419-residue polypeptide: Sulfate adenylyltransferase (419 aa).

It belongs to the sulfate adenylyltransferase family.

The catalysed reaction is sulfate + ATP + H(+) = adenosine 5'-phosphosulfate + diphosphate. The protein operates within sulfur metabolism; hydrogen sulfide biosynthesis; sulfite from sulfate: step 1/3. In Psychrobacter sp. (strain PRwf-1), this protein is Sulfate adenylyltransferase.